The following is a 115-amino-acid chain: Dolichyl-diphosphooligosaccharide--protein glycosyltransferase subunit DAD1 (115 aa).

Over 1–31 the chain is Cytoplasmic; sequence MARSTSKDAQALIQSLRSAYAATPSNLKIID. The helical transmembrane segment at 32–52 threads the bilayer; sequence LYVVFAVFTALIQVVYMAIVG. The Lumenal portion of the chain corresponds to 53 to 55; sequence SFP. A helical transmembrane segment spans residues 56-76; that stretch reads FNAFLSGLLSCIGTAVLAVCL. Residues 77-94 lie on the Cytoplasmic side of the membrane; sequence RIQVNKENKEFKDLAPER. The chain crosses the membrane as a helical span at residues 95 to 115; it reads AFADFVLCNLVLHLVIMNFLG.

This sequence belongs to the DAD/OST2 family. As to quaternary structure, component of the oligosaccharyltransferase (OST) complex.

It is found in the endoplasmic reticulum membrane. The protein operates within protein modification; protein glycosylation. Subunit of the oligosaccharyl transferase (OST) complex that catalyzes the initial transfer of a defined glycan (Glc(3)Man(9)GlcNAc(2) in eukaryotes) from the lipid carrier dolichol-pyrophosphate to an asparagine residue within an Asn-X-Ser/Thr consensus motif in nascent polypeptide chains, the first step in protein N-glycosylation. N-glycosylation occurs cotranslationally and the complex associates with the Sec61 complex at the channel-forming translocon complex that mediates protein translocation across the endoplasmic reticulum (ER). All subunits are required for a maximal enzyme activity. In Betula pendula (European white birch), this protein is Dolichyl-diphosphooligosaccharide--protein glycosyltransferase subunit DAD1 (DAD1).